A 190-amino-acid chain; its full sequence is MKKVSPSYLKHQFLIAMPHMHDENFAQTLTYVVEHNANGAMGLVINRPQSLTLADVLEQLRPELPAPKRCQEIAIHSGGPVQTDRGFVLHPSGQTFQATVNLPGGISLSTSQDVLFSIADGYGPDQNVITLGYAGWDAGQLDAEMADNAWLTCSFDPAILFDVDSEQRLDAAARRLGINLNLISTQAGHA.

The protein belongs to the UPF0301 (AlgH) family.

This Pseudomonas savastanoi pv. phaseolicola (strain 1448A / Race 6) (Pseudomonas syringae pv. phaseolicola (strain 1448A / Race 6)) protein is UPF0301 protein PSPPH_0476.